We begin with the raw amino-acid sequence, 411 residues long: Phosphoglycerate kinase (411 aa).

Substrate contacts are provided by residues 28–30, Arg45, 68–71, Arg125, and Arg165; these read DIN and HQSR. ATP contacts are provided by residues Glu338 and 364-367; that span reads GGHL.

It belongs to the phosphoglycerate kinase family. As to quaternary structure, homodimer.

It is found in the cytoplasm. The enzyme catalyses (2R)-3-phosphoglycerate + ATP = (2R)-3-phospho-glyceroyl phosphate + ADP. Its pathway is carbohydrate degradation; glycolysis; pyruvate from D-glyceraldehyde 3-phosphate: step 2/5. The chain is Phosphoglycerate kinase (pgk) from Methanothermobacter thermautotrophicus (strain ATCC 29096 / DSM 1053 / JCM 10044 / NBRC 100330 / Delta H) (Methanobacterium thermoautotrophicum).